Here is a 353-residue protein sequence, read N- to C-terminus: Protein RecA (353 aa).

Residue 67–74 participates in ATP binding; it reads GPESSGKT.

Belongs to the RecA family.

The protein localises to the cytoplasm. Functionally, can catalyze the hydrolysis of ATP in the presence of single-stranded DNA, the ATP-dependent uptake of single-stranded DNA by duplex DNA, and the ATP-dependent hybridization of homologous single-stranded DNAs. It interacts with LexA causing its activation and leading to its autocatalytic cleavage. The polypeptide is Protein RecA (Shewanella woodyi (strain ATCC 51908 / MS32)).